The primary structure comprises 158 residues: MQGRLSAWLVKHGLIHRSLGFDYQGIETLQIKPEDWHSIAVILYVYGYNYLRSQCAYDVAPGGLLASVYHLTRIEYGVDQPEEVCIKVFAPRRNPRIPSVFWVWKSVDFQERESYDMLGIFYATHPRLKRILMPESWVGWPLRKDYIAPNFYEIQDAH.

The protein belongs to the complex I 30 kDa subunit family. As to quaternary structure, NDH is composed of at least 16 different subunits, 5 of which are encoded in the nucleus.

The protein localises to the plastid. Its subcellular location is the chloroplast thylakoid membrane. It catalyses the reaction a plastoquinone + NADH + (n+1) H(+)(in) = a plastoquinol + NAD(+) + n H(+)(out). The catalysed reaction is a plastoquinone + NADPH + (n+1) H(+)(in) = a plastoquinol + NADP(+) + n H(+)(out). Its function is as follows. NDH shuttles electrons from NAD(P)H:plastoquinone, via FMN and iron-sulfur (Fe-S) centers, to quinones in the photosynthetic chain and possibly in a chloroplast respiratory chain. The immediate electron acceptor for the enzyme in this species is believed to be plastoquinone. Couples the redox reaction to proton translocation, and thus conserves the redox energy in a proton gradient. This is NAD(P)H-quinone oxidoreductase subunit J, chloroplastic from Panax ginseng (Korean ginseng).